A 968-amino-acid chain; its full sequence is Protein translocase subunit SecA (968 aa).

Residues glutamine 86, 104 to 108, and aspartate 494 each bind ATP; that span reads GEGKT. Residues 835–968 are disordered; that stretch reads PAESAEESTD…RAAKAAKKRR (134 aa). Low complexity-rich tracts occupy residues 883–892 and 910–923; these read ARVATRPAAE and SAPS…FSEG. Over residues 956 to 968 the composition is skewed to basic residues; the sequence is ARRRAAKAAKKRR.

The protein belongs to the SecA family. As to quaternary structure, monomer and homodimer. Part of the essential Sec protein translocation apparatus which comprises SecA, SecYEG and auxiliary proteins SecDF. Other proteins may also be involved.

The protein resides in the cell membrane. It is found in the cytoplasm. The enzyme catalyses ATP + H2O + cellular proteinSide 1 = ADP + phosphate + cellular proteinSide 2.. In terms of biological role, part of the Sec protein translocase complex. Interacts with the SecYEG preprotein conducting channel. Has a central role in coupling the hydrolysis of ATP to the transfer of proteins into and across the cell membrane, serving as an ATP-driven molecular motor driving the stepwise translocation of polypeptide chains across the membrane. The sequence is that of Protein translocase subunit SecA from Beutenbergia cavernae (strain ATCC BAA-8 / DSM 12333 / CCUG 43141 / JCM 11478 / NBRC 16432 / NCIMB 13614 / HKI 0122).